Consider the following 244-residue polypeptide: Thaumatin-like protein 1 (244 aa).

The first 22 residues, 1–22, serve as a signal peptide directing secretion; it reads MKFEALIGLVLVFLSEHAGVYS. Disulfide bonds link C31/C243, C79/C89, C94/C101, C149/C232, C154/C215, C162/C178, C182/C191, and C192/C202. A glycan (N-linked (GlcNAc...) asparagine) is linked at N150.

This sequence belongs to the thaumatin family. In terms of processing, N-glycosylated. As to expression, style.

It is found in the secreted. This chain is Thaumatin-like protein 1 (TL1), found in Pyrus pyrifolia (Chinese pear).